A 183-amino-acid chain; its full sequence is Large ribosomal subunit protein uL5 (183 aa).

Belongs to the universal ribosomal protein uL5 family. As to quaternary structure, part of the 50S ribosomal subunit; part of the 5S rRNA/L5/L18/L25 subcomplex. Contacts the 5S rRNA and the P site tRNA. Forms a bridge to the 30S subunit in the 70S ribosome.

This is one of the proteins that bind and probably mediate the attachment of the 5S RNA into the large ribosomal subunit, where it forms part of the central protuberance. In the 70S ribosome it contacts protein S13 of the 30S subunit (bridge B1b), connecting the 2 subunits; this bridge is implicated in subunit movement. Contacts the P site tRNA; the 5S rRNA and some of its associated proteins might help stabilize positioning of ribosome-bound tRNAs. The polypeptide is Large ribosomal subunit protein uL5 (Flavobacterium johnsoniae (strain ATCC 17061 / DSM 2064 / JCM 8514 / BCRC 14874 / CCUG 350202 / NBRC 14942 / NCIMB 11054 / UW101) (Cytophaga johnsonae)).